A 169-amino-acid chain; its full sequence is MSVLQVLTFPDDRLRTVAKPVEQVTPEIQQIVDDMLETMYAEEGIGLAATQVDIHQRIVVIDISETRDQPMVLINPEIIEKRGEDGIEEGCLSVPGARALVPRAAEVTVKALDRNGQEYQFDADDLLAICVQHELDHLAGKLFVDYLSPLKRNRIKEKLEKIKRFNEKK.

Fe cation-binding residues include cysteine 91 and histidine 133. Residue glutamate 134 is part of the active site. Histidine 137 serves as a coordination point for Fe cation.

Belongs to the polypeptide deformylase family. Requires Fe(2+) as cofactor.

The enzyme catalyses N-terminal N-formyl-L-methionyl-[peptide] + H2O = N-terminal L-methionyl-[peptide] + formate. Removes the formyl group from the N-terminal Met of newly synthesized proteins. Requires at least a dipeptide for an efficient rate of reaction. N-terminal L-methionine is a prerequisite for activity but the enzyme has broad specificity at other positions. The protein is Peptide deformylase 1 of Vibrio cholerae serotype O1 (strain ATCC 39315 / El Tor Inaba N16961).